A 178-amino-acid polypeptide reads, in one-letter code: Meiotically up-regulated gene 95 protein (178 aa).

Over 1 to 12 (MNLFVYIAQNPT) the chain is Cytoplasmic. Residues 13 to 30 (LTKWFFCCVCTILTMPFF) traverse the membrane as a helical; Signal-anchor for type II membrane protein segment. At 31 to 178 (KKPYRKRGIS…ESIEKPENDN (148 aa)) the chain is on the lumenal side.

Its subcellular location is the endoplasmic reticulum membrane. In terms of biological role, has a role in meiosis. The chain is Meiotically up-regulated gene 95 protein (mug95) from Schizosaccharomyces pombe (strain 972 / ATCC 24843) (Fission yeast).